A 654-amino-acid chain; its full sequence is Probable Xaa-Pro aminopeptidase P (654 aa).

Residues Asp449, Asp460, Glu558, and Glu572 each contribute to the Mn(2+) site.

The protein belongs to the peptidase M24B family. The cofactor is Mn(2+).

The catalysed reaction is Release of any N-terminal amino acid, including proline, that is linked to proline, even from a dipeptide or tripeptide.. Catalyzes the removal of a penultimate prolyl residue from the N-termini of peptides. The protein is Probable Xaa-Pro aminopeptidase P (ampp) of Aspergillus fumigatus (strain CBS 144.89 / FGSC A1163 / CEA10) (Neosartorya fumigata).